We begin with the raw amino-acid sequence, 186 residues long: Peptidyl-tRNA hydrolase (186 aa).

Y16 provides a ligand contact to tRNA. H21 serves as the catalytic Proton acceptor. Positions 60 and 62 each coordinate tRNA.

Belongs to the PTH family. Monomer.

The protein resides in the cytoplasm. The enzyme catalyses an N-acyl-L-alpha-aminoacyl-tRNA + H2O = an N-acyl-L-amino acid + a tRNA + H(+). Hydrolyzes ribosome-free peptidyl-tRNAs (with 1 or more amino acids incorporated), which drop off the ribosome during protein synthesis, or as a result of ribosome stalling. Functionally, catalyzes the release of premature peptidyl moieties from peptidyl-tRNA molecules trapped in stalled 50S ribosomal subunits, and thus maintains levels of free tRNAs and 50S ribosomes. The polypeptide is Peptidyl-tRNA hydrolase (Tropheryma whipplei (strain TW08/27) (Whipple's bacillus)).